The following is a 448-amino-acid chain: Probable glycine dehydrogenase (decarboxylating) subunit 1 (448 aa).

This sequence belongs to the GcvP family. N-terminal subunit subfamily. In terms of assembly, the glycine cleavage system is composed of four proteins: P, T, L and H. In this organism, the P 'protein' is a heterodimer of two subunits.

The catalysed reaction is N(6)-[(R)-lipoyl]-L-lysyl-[glycine-cleavage complex H protein] + glycine + H(+) = N(6)-[(R)-S(8)-aminomethyldihydrolipoyl]-L-lysyl-[glycine-cleavage complex H protein] + CO2. The glycine cleavage system catalyzes the degradation of glycine. The P protein binds the alpha-amino group of glycine through its pyridoxal phosphate cofactor; CO(2) is released and the remaining methylamine moiety is then transferred to the lipoamide cofactor of the H protein. The chain is Probable glycine dehydrogenase (decarboxylating) subunit 1 from Geobacillus kaustophilus (strain HTA426).